Reading from the N-terminus, the 467-residue chain is NALCN channel auxiliary factor 1 (467 aa).

A helical transmembrane segment spans residues 40-60 (LSLASLLFFTVLLSDHLWFCA). The interval 121–161 (MGESSPAAQAHRLLSASSSPTLPPSPGGGGGSKGNRGKNNR) is disordered. Residues asparagine 160, asparagine 226, and asparagine 254 are each glycosylated (N-linked (GlcNAc...) asparagine). 7 disulfides stabilise this stretch: cysteine 200-cysteine 270, cysteine 235-cysteine 322, cysteine 255-cysteine 270, cysteine 313-cysteine 350, cysteine 333-cysteine 386, cysteine 339-cysteine 385, and cysteine 343-cysteine 370. The span at 390–408 (SEEQTAPRPKGTVDRRDSC) shows a compositional bias: basic and acidic residues. Residues 390–409 (SEEQTAPRPKGTVDRRDSCP) are disordered. Residues 426-446 (LKLCVLVLILLHTVLTASAAQ) traverse the membrane as a helical segment. Asparagine 462 is a glycosylation site (N-linked (GlcNAc...) asparagine).

The protein belongs to the NALF family. Component of the NALCN channel complex. NALCN complex consists of NALCN and auxiliary subunits, UNC79, UNC80 and NACL1. These auxiliary subunits are essential for the NALCN channel function.

Its subcellular location is the cell membrane. Functionally, auxillary component of the NALCN sodium channel complex, a channel that regulates the resting membrane potential and controls neuronal excitability. This Mus musculus (Mouse) protein is NALCN channel auxiliary factor 1.